We begin with the raw amino-acid sequence, 431 residues long: Homeobox protein knotted-1-like 3 (431 aa).

A disordered region spans residues 15–47; it reads NHFTDQHQPPPPQPPPPPPQQQQHFQEAPPPNW. Residues 22-34 show a composition bias toward pro residues; the sequence is QPPPPQPPPPPPQ. Positions 322–342 constitute an ELK domain; it reads ELKHELKQGYKEKIVDIREEI. The homeobox; TALE-type DNA-binding region spans 343–406; that stretch reads LRKRRAGKLP…NQRKRNWHSN (64 aa). A disordered region spans residues 402–431; it reads NWHSNPSSSTVLKNKRKSNAGDNSGRERFA. Residues 404 to 413 are compositionally biased toward polar residues; it reads HSNPSSSTVL.

This sequence belongs to the TALE/KNOX homeobox family. May form heterodimeric complex with the TALE/BELL proteins. Interacts with OFP1, OFP2, OFP4, OFP12 and OFP14. Interacts with KNATM-B.

The protein resides in the nucleus. The protein is Homeobox protein knotted-1-like 3 (KNAT3) of Arabidopsis thaliana (Mouse-ear cress).